The following is a 295-amino-acid chain: GTPase Era (295 aa).

One can recognise an Era-type G domain in the interval 3 to 170 (KSGFVTIVGR…VDLMKTELPE (168 aa)). The G1 stretch occupies residues 11 to 18 (GRPNVGKS). GTP is bound at residue 11–18 (GRPNVGKS). The G2 stretch occupies residues 37 to 41 (QTTRN). The segment at 58–61 (DTPG) is G3. GTP is bound by residues 58 to 62 (DTPGI) and 120 to 123 (NKID). The G4 stretch occupies residues 120–123 (NKID). The interval 149-151 (IAA) is G5. In terms of domain architecture, KH type-2 spans 201 to 278 (LRDEVPHGIA…NVKIWVKVRK (78 aa)).

Belongs to the TRAFAC class TrmE-Era-EngA-EngB-Septin-like GTPase superfamily. Era GTPase family. As to quaternary structure, monomer.

Its subcellular location is the cytoplasm. The protein localises to the cell membrane. Its function is as follows. An essential GTPase that binds both GDP and GTP, with rapid nucleotide exchange. Plays a role in 16S rRNA processing and 30S ribosomal subunit biogenesis and possibly also in cell cycle regulation and energy metabolism. In Clostridium botulinum (strain Alaska E43 / Type E3), this protein is GTPase Era.